The sequence spans 270 residues: 3-methyl-2-oxobutanoate hydroxymethyltransferase (270 aa).

Residues D50 and D89 each coordinate Mg(2+). Residues 50–51, D89, and K118 contribute to the 3-methyl-2-oxobutanoate site; that span reads DS. E120 contacts Mg(2+). E187 (proton acceptor) is an active-site residue.

The protein belongs to the PanB family. As to quaternary structure, homodecamer; pentamer of dimers. It depends on Mg(2+) as a cofactor.

It is found in the cytoplasm. The catalysed reaction is 3-methyl-2-oxobutanoate + (6R)-5,10-methylene-5,6,7,8-tetrahydrofolate + H2O = 2-dehydropantoate + (6S)-5,6,7,8-tetrahydrofolate. The protein operates within cofactor biosynthesis; (R)-pantothenate biosynthesis; (R)-pantoate from 3-methyl-2-oxobutanoate: step 1/2. Functionally, catalyzes the reversible reaction in which hydroxymethyl group from 5,10-methylenetetrahydrofolate is transferred onto alpha-ketoisovalerate to form ketopantoate. This is 3-methyl-2-oxobutanoate hydroxymethyltransferase from Helicobacter pylori (strain G27).